A 438-amino-acid chain; its full sequence is Chaperone SurA (438 aa).

A signal peptide spans 1–28 (MKTMNPYIRHLILLICCLGGMLAQPLSA). 2 PpiC domains span residues 181–282 (EEEY…KLVS) and 292–390 (VQQT…QVLE).

Its subcellular location is the periplasm. The catalysed reaction is [protein]-peptidylproline (omega=180) = [protein]-peptidylproline (omega=0). In terms of biological role, chaperone involved in the correct folding and assembly of outer membrane proteins. Recognizes specific patterns of aromatic residues and the orientation of their side chains, which are found more frequently in integral outer membrane proteins. May act in both early periplasmic and late outer membrane-associated steps of protein maturation. This Dechloromonas aromatica (strain RCB) protein is Chaperone SurA.